Here is a 60-residue protein sequence, read N- to C-terminus: Large ribosomal subunit protein uL30 (60 aa).

Belongs to the universal ribosomal protein uL30 family. Part of the 50S ribosomal subunit.

The sequence is that of Large ribosomal subunit protein uL30 from Streptococcus pneumoniae serotype 2 (strain D39 / NCTC 7466).